Reading from the N-terminus, the 265-residue chain is Protein Pars_0096 (265 aa).

It belongs to the CinA family.

This Pyrobaculum arsenaticum (strain DSM 13514 / JCM 11321 / PZ6) protein is Protein Pars_0096.